The primary structure comprises 165 residues: Alanine- and arginine-rich domain-containing protein (165 aa).

Residues 136-165 (QQLKKRQDQERASKPQSPQDEEMNPECGNA) form a disordered region.

The protein is Alanine- and arginine-rich domain-containing protein (Aard) of Rattus norvegicus (Rat).